Reading from the N-terminus, the 336-residue chain is Mitochondrial fission regulator 2 (336 aa).

A coiled-coil region spans residues Q139–A166. The interval H296–L336 is disordered. The span at R297–S309 shows a compositional bias: basic and acidic residues. The span at Q325 to L336 shows a compositional bias: basic residues.

Belongs to the MTFR1 family.

The protein resides in the mitochondrion. Its function is as follows. May play a role in mitochondrial aerobic respiration. Can also promote mitochondrial fission. The polypeptide is Mitochondrial fission regulator 2 (mtfr2) (Danio rerio (Zebrafish)).